Here is a 327-residue protein sequence, read N- to C-terminus: Toluene-4-monooxygenase system, hydroxylase component subunit beta (327 aa).

The protein belongs to the TmoE/XamoE family. As to quaternary structure, the alkene monooxygenase multicomponent enzyme system is composed of an electron transfer component and a monooxygenase component interacting with the effector protein TmoD. The electron transfer component is composed of a ferredoxin reductase (TmoF) and a ferredoxin (TmoC), and the monooxygenase component is formed by a heterohexamer (dimer of heterotrimers) of two alpha subunits (TmoA), two beta subunits (TmoE) and two gamma subunits (TmoB).

It catalyses the reaction toluene + NADH + O2 + H(+) = 4-methylphenol + NAD(+) + H2O. The protein operates within xenobiotic degradation; toluene degradation. Inhibited by Zn(2+) and Cu(2+). Component of the toluene-4-monooxygenase multicomponent enzyme system which catalyzes the O2- and NADH-dependent hydroxylation of toluene to form p-cresol. Also able to convert benzene to phenol, catechol, and 1,2,3-trihydroxybenzene by successive hydroxylations. The protein is Toluene-4-monooxygenase system, hydroxylase component subunit beta of Ectopseudomonas mendocina (Pseudomonas mendocina).